Consider the following 497-residue polypeptide: MKFNDELILLLKARYPIIYINTIEEDRVEYIIRKHIKANLNRSIYSWDFVDGYTNNPNNEGFAKRNPLQALELIERLTSETPALFLLKDFNRFLTDISISRKLKNVSRILKLQPKTIIIIGSDFQIPKELQDLITVLQFNLPVENEITQELTRLVNSLNLTIDPSLFESLTRACQGLSLERIRRVLSKIIATHKTIDENSISILLSEKKQIISQTEILEYWSVNEKMGNIGGVDNLKDWLKKRKTSFTIQASNYGLPTPRGLLLIGIQGTGKSLTAKAIATEWQLPLLKLDVGRLFGGIVGESESRLRQMIDVAETLSPCILWIDEMDKAFSNNDSRGDSGTSNRVLATFISWLSEKTKPVFVVATANNVDLLPLEIIRKGRFDEIFFLDLPELEERKEIFKIHIQEFRPNSWKLFDYKKLAQLSESFSGAEIRQSIIEAMYQAFDQQREFTTDDICLALKQLIPLAQLENSQTLKLQSWASSGRIRLASSKRISIN.

266–273 (GIQGTGKS) is a binding site for ATP.

Belongs to the AAA ATPase family. Highly divergent.

The protein localises to the plastid. Its subcellular location is the chloroplast. This is an uncharacterized protein from Trieres chinensis (Marine centric diatom).